Here is a 154-residue protein sequence, read N- to C-terminus: Xanthine-guanine phosphoribosyltransferase (154 aa).

5-phospho-alpha-D-ribose 1-diphosphate is bound by residues 37 to 38, R69, and 88 to 96; these read RG and DDLVDSGDT. Residue R69 coordinates GMP. D89 lines the Mg(2+) pocket. Guanine-binding residues include D92 and I135. Residues D92 and I135 each coordinate xanthine. GMP contacts are provided by residues 92–96 and 134–135; these read DSGDT and WI.

This sequence belongs to the purine/pyrimidine phosphoribosyltransferase family. XGPT subfamily. As to quaternary structure, homotetramer. Mg(2+) serves as cofactor.

It is found in the cell inner membrane. The enzyme catalyses GMP + diphosphate = guanine + 5-phospho-alpha-D-ribose 1-diphosphate. The catalysed reaction is XMP + diphosphate = xanthine + 5-phospho-alpha-D-ribose 1-diphosphate. It catalyses the reaction IMP + diphosphate = hypoxanthine + 5-phospho-alpha-D-ribose 1-diphosphate. Its pathway is purine metabolism; GMP biosynthesis via salvage pathway; GMP from guanine: step 1/1. It functions in the pathway purine metabolism; XMP biosynthesis via salvage pathway; XMP from xanthine: step 1/1. Functionally, purine salvage pathway enzyme that catalyzes the transfer of the ribosyl-5-phosphate group from 5-phospho-alpha-D-ribose 1-diphosphate (PRPP) to the N9 position of the 6-oxopurines guanine and xanthine to form the corresponding ribonucleotides GMP (guanosine 5'-monophosphate) and XMP (xanthosine 5'-monophosphate), with the release of PPi. To a lesser extent, also acts on hypoxanthine. This Vibrio cholerae serotype O1 (strain ATCC 39541 / Classical Ogawa 395 / O395) protein is Xanthine-guanine phosphoribosyltransferase.